A 187-amino-acid chain; its full sequence is Calmodulin-like protein 30 (187 aa).

The tract at residues 21–47 (KPSRMFSRDRQSSGLSSPGPGGFSQPS) is disordered. The span at 32–47 (SSGLSSPGPGGFSQPS) shows a compositional bias: low complexity. 4 EF-hand domains span residues 46–81 (PSVN…LGQE), 82–117 (RAIE…SGGI), 129–152 (FDLN…LGER), and 153–187 (CSLE…SNNV). Ca(2+)-binding residues include D59, D61, D63, K65, E70, D95, D97, D99, E106, D130, N132, D134, K136, E141, D166, D168, D170, and E177.

This sequence belongs to the calmodulin family.

Its function is as follows. Potential calcium sensor. This chain is Calmodulin-like protein 30, found in Arabidopsis thaliana (Mouse-ear cress).